A 272-amino-acid polypeptide reads, in one-letter code: Ethanolamine ammonia-lyase small subunit (272 aa).

Positions 161, 182, and 211 each coordinate adenosylcob(III)alamin.

Belongs to the EutC family. The basic unit is a heterodimer which dimerizes to form tetramers. The heterotetramers trimerize; 6 large subunits form a core ring with 6 small subunits projecting outwards. Requires adenosylcob(III)alamin as cofactor.

It is found in the bacterial microcompartment. It carries out the reaction ethanolamine = acetaldehyde + NH4(+). It participates in amine and polyamine degradation; ethanolamine degradation. Catalyzes the deamination of various vicinal amino-alcohols to oxo compounds. Allows this organism to utilize ethanolamine as the sole source of nitrogen and carbon in the presence of external vitamin B12. In Xanthomonas campestris pv. campestris (strain ATCC 33913 / DSM 3586 / NCPPB 528 / LMG 568 / P 25), this protein is Ethanolamine ammonia-lyase small subunit.